A 243-amino-acid polypeptide reads, in one-letter code: Peptidase E (243 aa).

Active-site charge relay system residues include Ser118, Asp133, and His155.

It belongs to the peptidase S51 family.

It localises to the cytoplasm. It catalyses the reaction Dipeptidase E catalyzes the hydrolysis of dipeptides Asp-|-Xaa. It does not act on peptides with N-terminal Glu, Asn or Gln, nor does it cleave isoaspartyl peptides.. In terms of biological role, hydrolyzes dipeptides containing N-terminal aspartate residues. May play a role in allowing the cell to use peptide aspartate to spare carbon otherwise required for the synthesis of the aspartate family of amino acids. The sequence is that of Peptidase E from Streptomyces coelicolor (strain ATCC BAA-471 / A3(2) / M145).